Here is a 271-residue protein sequence, read N- to C-terminus: Probable endonuclease lcl3 (271 aa).

Residues 1 to 27 form a disordered region; sequence MRWPWSGDDHEQNKSSRLWATSPKSSD. Residues 15–27 show a composition bias toward polar residues; that stretch reads SSRLWATSPKSSD. Residues 38-55 traverse the membrane as a helical segment; sequence LIATLALTVSTVAGVRLY. Positions 76-236 constitute a TNase-like domain; it reads KSLFGQVTSV…RDSKVGMWAK (161 aa). Arginine 127 is a catalytic residue. Aspartate 132 contributes to the Ca(2+) binding site. Active-site residues include glutamate 135 and arginine 175. Positions 226 to 271 are disordered; the sequence is ARDSKVGMWAKPTLRQRLGGAPTQPPESPREYKNRHNAAEKLKKPG. The span at 253–271 shows a compositional bias: basic and acidic residues; that stretch reads SPREYKNRHNAAEKLKKPG.

The protein belongs to the LCL3 family.

It is found in the mitochondrion. It localises to the membrane. This chain is Probable endonuclease lcl3 (lcl3), found in Pyrenophora tritici-repentis (strain Pt-1C-BFP) (Wheat tan spot fungus).